Consider the following 198-residue polypeptide: Pyridoxal 5'-phosphate synthase subunit PdxT (198 aa).

Residue G52–S54 participates in L-glutamine binding. The active-site Nucleophile is C84. L-glutamine-binding positions include R115 and I143 to R144. Catalysis depends on charge relay system residues H179 and E181.

The protein belongs to the glutaminase PdxT/SNO family. As to quaternary structure, in the presence of PdxS, forms a dodecamer of heterodimers. Only shows activity in the heterodimer.

It catalyses the reaction aldehydo-D-ribose 5-phosphate + D-glyceraldehyde 3-phosphate + L-glutamine = pyridoxal 5'-phosphate + L-glutamate + phosphate + 3 H2O + H(+). The enzyme catalyses L-glutamine + H2O = L-glutamate + NH4(+). It functions in the pathway cofactor biosynthesis; pyridoxal 5'-phosphate biosynthesis. In terms of biological role, catalyzes the hydrolysis of glutamine to glutamate and ammonia as part of the biosynthesis of pyridoxal 5'-phosphate. The resulting ammonia molecule is channeled to the active site of PdxS. This Methanococcoides burtonii (strain DSM 6242 / NBRC 107633 / OCM 468 / ACE-M) protein is Pyridoxal 5'-phosphate synthase subunit PdxT.